We begin with the raw amino-acid sequence, 308 residues long: MAPFSFLLTLLLYTLSAGASVLESRSSALLPRAGSLQQVTNFGDNPTNVGMYIYVPNNLASNPGIIVAIHYCTGTAEAYYNGSPYAKLAEKHGFIVIYPESPYQGKCWDVSSRASLTHNGGGNSNSIANMVKWTIKKYKTNTSKVFVTGSSSGAMMTNVMAATYPDMFAAGVVYSGVAAGCFMSNTNQQAAWNSTCAHGKSIATPEAWAHVAKAMYPGYDGPRPRMQIYHGSADTTLYPQNYQETCKEWAGVFGYDYNAPRSVENNKPQANYKTTTWGKELQGIYATGVGHTVPINGDRDMAWFGFAK.

An N-terminal signal peptide occupies residues 1 to 19; it reads MAPFSFLLTLLLYTLSAGA. Asparagine 141 carries N-linked (GlcNAc...) asparagine glycosylation. Serine 151 functions as the Charge relay system in the catalytic mechanism. An N-linked (GlcNAc...) asparagine glycan is attached at asparagine 193.

This sequence belongs to the carbohydrate esterase 1 (CE1) family. AxeA subfamily. In terms of assembly, monomer.

The protein resides in the secreted. The enzyme catalyses Deacetylation of xylans and xylo-oligosaccharides.. It participates in glycan degradation; xylan degradation. In terms of biological role, acetylxylan esterase involved in the hydrolysis of xylan, a major structural heterogeneous polysaccharide found in plant biomass representing the second most abundant polysaccharide in the biosphere, after cellulose. Degrades acetylated xylans by cleaving acetyl side groups from the hetero-xylan backbone. The protein is Probable acetylxylan esterase A (axeA) of Aspergillus clavatus (strain ATCC 1007 / CBS 513.65 / DSM 816 / NCTC 3887 / NRRL 1 / QM 1276 / 107).